Here is a 316-residue protein sequence, read N- to C-terminus: Ribosomal RNA small subunit methyltransferase A (316 aa).

S-adenosyl-L-methionine is bound by residues N33, V35, G60, E81, D110, and N133.

The protein belongs to the class I-like SAM-binding methyltransferase superfamily. rRNA adenine N(6)-methyltransferase family. RsmA subfamily.

It is found in the cytoplasm. It catalyses the reaction adenosine(1518)/adenosine(1519) in 16S rRNA + 4 S-adenosyl-L-methionine = N(6)-dimethyladenosine(1518)/N(6)-dimethyladenosine(1519) in 16S rRNA + 4 S-adenosyl-L-homocysteine + 4 H(+). Functionally, specifically dimethylates two adjacent adenosines (A1518 and A1519) in the loop of a conserved hairpin near the 3'-end of 16S rRNA in the 30S particle. May play a critical role in biogenesis of 30S subunits. This chain is Ribosomal RNA small subunit methyltransferase A, found in Corynebacterium jeikeium (strain K411).